A 373-amino-acid chain; its full sequence is RNA 3'-terminal phosphate cyclase-like protein (373 aa).

The protein belongs to the RNA 3'-terminal cyclase family. Type 2 subfamily. In terms of assembly, part of the small subunit (SSU) processome, composed of more than 70 proteins and the RNA chaperone small nucleolar RNA (snoRNA) U3. Interacts with BMS1.

It is found in the nucleus. It localises to the nucleolus. Its function is as follows. As part of the small subunit (SSU) processome, it plays a role in 40S-ribosomal-subunit biogenesis in the early pre-rRNA processing steps at sites A0, A1 and A2 that are required for proper maturation of the 18S RNA. Activates BMS1 by promoting GDP/GTP exchange. Does not have cyclase activity. The sequence is that of RNA 3'-terminal phosphate cyclase-like protein from Homo sapiens (Human).